Consider the following 315-residue polypeptide: Methenyltetrahydromethanopterin cyclohydrolase (315 aa).

This sequence belongs to the MCH family.

The protein localises to the cytoplasm. The catalysed reaction is 5,10-methenyl-5,6,7,8-tetrahydromethanopterin + H2O = N(5)-formyl-5,6,7,8-tetrahydromethanopterin + H(+). It functions in the pathway one-carbon metabolism; methanogenesis from CO(2); 5,10-methenyl-5,6,7,8-tetrahydromethanopterin from CO(2): step 3/3. Its function is as follows. Catalyzes the reversible interconversion of 5-formyl-H(4)MPT to methenyl-H(4)MPT(+). The chain is Methenyltetrahydromethanopterin cyclohydrolase from Methanosphaerula palustris (strain ATCC BAA-1556 / DSM 19958 / E1-9c).